Consider the following 555-residue polypeptide: WRKY transcription factor WRKY24 (555 aa).

2 disordered regions span residues 38 to 65 (GGGG…PSSF) and 132 to 248 (QTAP…CTFP). Pro residues predominate over residues 51–61 (PSLPLSPPPVS). The segment covering 163 to 194 (QQQQQPWGYQQQPAGMDAGANAASFGAAPFQA) has biased composition (low complexity). The segment at residues 214–278 (SQRRSSDDGY…YKGTHNHAKP (65 aa)) is a DNA-binding region (WRKY 1). A Nuclear localization signal motif is present at residues 253 to 259 (KKKVERS). Residues 270-367 (KGTHNHAKPQ…EGISMAGNRT (98 aa)) are disordered. Composition is skewed to polar residues over residues 277 to 294 (KPQN…QVLQ) and 310 to 320 (TAATPENSSAS). The span at 347–356 (DSKRWRKDGD) shows a compositional bias: basic and acidic residues. Positions 379–444 (SDIDILDDGY…YEGKHNHDVP (66 aa)) form a DNA-binding region, WRKY 2. Residues 466 to 555 (HPYLPNQPPP…DDMFFQNSLY (90 aa)) form a transcription repression of gibberellic acid (GA)-induced promoters region. Disordered regions lie at residues 471 to 498 (NQPP…GQGP) and 513 to 555 (GFDD…NSLY).

This sequence belongs to the WRKY group II-a family. In terms of tissue distribution, expressed in aleurone cells. Mostly expressed in aleurone layers and leaves, and, to a lower extent, in roots, panicles and embryos.

The protein resides in the nucleus. Functionally, transcription repressor. Interacts specifically with the W box (5'-(T)TGAC[CT]-3'), a frequently occurring elicitor-responsive cis-acting element. Negative regulator of both gibberellic acid (GA) and abscisic acid (ABA) signaling in aleurone cells, probably by interfering with GAM1, via the specific repression of GA- and ABA-induced promoters. The polypeptide is WRKY transcription factor WRKY24 (Oryza sativa subsp. indica (Rice)).